Here is a 215-residue protein sequence, read N- to C-terminus: Cytochrome b6 (215 aa).

Residues 32–52 (IFYCLGGITLTCFLVQVATGF) form a helical membrane-spanning segment. Heme c is bound at residue Cys-35. Heme b-binding residues include His-86 and His-100. The next 3 helical transmembrane spans lie at 90 to 110 (ASMM…TGGF), 116 to 136 (LTWV…VTGY), and 186 to 206 (LHTF…FLMI). Positions 187 and 202 each coordinate heme b.

Belongs to the cytochrome b family. PetB subfamily. As to quaternary structure, the 4 large subunits of the cytochrome b6-f complex are cytochrome b6, subunit IV (17 kDa polypeptide, PetD), cytochrome f and the Rieske protein, while the 4 small subunits are PetG, PetL, PetM and PetN. The complex functions as a dimer. It depends on heme b as a cofactor. Heme c serves as cofactor.

It localises to the plastid. The protein localises to the chloroplast thylakoid membrane. Component of the cytochrome b6-f complex, which mediates electron transfer between photosystem II (PSII) and photosystem I (PSI), cyclic electron flow around PSI, and state transitions. In Welwitschia mirabilis (Tree tumbo), this protein is Cytochrome b6.